Reading from the N-terminus, the 230-residue chain is Large ribosomal subunit protein uL3 (230 aa).

Disordered regions lie at residues 125-149 (QAIG…SLGD) and 210-230 (PNPK…VKNE).

The protein belongs to the universal ribosomal protein uL3 family. Part of the 50S ribosomal subunit. Forms a cluster with proteins L14 and L19.

In terms of biological role, one of the primary rRNA binding proteins, it binds directly near the 3'-end of the 23S rRNA, where it nucleates assembly of the 50S subunit. The polypeptide is Large ribosomal subunit protein uL3 (Mesomycoplasma hyopneumoniae (strain 232) (Mycoplasma hyopneumoniae)).